The chain runs to 920 residues: 3-hydroxy-3-methylglutaryl-coenzyme A reductase (920 aa).

A helical membrane pass occupies residues Phe-12–Leu-32. Asn-37 is a glycosylation site (N-linked (GlcNAc...) asparagine). The disordered stretch occupies residues Gly-62–His-85. The segment covering Ile-71–Ser-82 has biased composition (polar residues). One can recognise an SSD domain in the interval Asp-106–Leu-263. 5 consecutive transmembrane segments (helical) span residues Val-107–His-129, Val-136–Ile-156, Leu-170–Leu-190, Leu-208–Thr-228, and Val-237–Tyr-257. 2 N-linked (GlcNAc...) asparagine glycosylation sites follow: Asn-342 and Asn-346. A helical transmembrane segment spans residues Ser-364 to Phe-384. A linker region spans residues Asp-385–Gly-498. N-linked (GlcNAc...) asparagine glycans are attached at residues Asn-443 and Asn-475. A catalytic region spans residues Gly-499–Gly-829. Residues Glu-586, Lys-717, and Asp-793 each act as charge relay system in the active site. N-linked (GlcNAc...) asparagine glycosylation is found at Asn-797 and Asn-802. His-892 acts as the Proton donor in catalysis. N-linked (GlcNAc...) asparagine glycosylation is found at Asn-896 and Asn-910.

Belongs to the HMG-CoA reductase family. In terms of tissue distribution, highly expressed in embryonic gonadal mesoderm, where expression is initially broad, and then becomes restricted to a segmental pattern at stage 11. Expression is then further restricted to a cluster of cells in each of parasegments 10, 11 and 12, corresponding to the developing gonadal mesoderm. Not expressed in pole cells.

It localises to the endoplasmic reticulum membrane. It catalyses the reaction (R)-mevalonate + 2 NADP(+) + CoA = (3S)-3-hydroxy-3-methylglutaryl-CoA + 2 NADPH + 2 H(+). Its pathway is metabolic intermediate biosynthesis; (R)-mevalonate biosynthesis; (R)-mevalonate from acetyl-CoA: step 3/3. With respect to regulation, the activity of HMG-CoA-reductase is suppressed by exogenous mevalonate. Functionally, synthesis of mevalonate for the production of non-sterol isoprenoids, which are essential for growth differentiation. Provides spatial information during embryogenesis to guide migrating primordial germ cells (the pole cells) from the ectoderm to the mesoderm. Also required for association of the pole cells with the gonadal mesoderm. This Drosophila melanogaster (Fruit fly) protein is 3-hydroxy-3-methylglutaryl-coenzyme A reductase (Hmgcr).